A 279-amino-acid polypeptide reads, in one-letter code: Octanoyl-[GcvH]:protein N-octanoyltransferase (279 aa).

One can recognise a BPL/LPL catalytic domain in the interval glutamate 48 to valine 253. Cysteine 152 serves as the catalytic Acyl-thioester intermediate.

Belongs to the octanoyltransferase LipL family.

The catalysed reaction is N(6)-octanoyl-L-lysyl-[glycine-cleavage complex H protein] + L-lysyl-[lipoyl-carrier protein] = N(6)-octanoyl-L-lysyl-[lipoyl-carrier protein] + L-lysyl-[glycine-cleavage complex H protein]. Its pathway is protein modification; protein lipoylation via endogenous pathway; protein N(6)-(lipoyl)lysine from octanoyl-[acyl-carrier-protein]. In terms of biological role, catalyzes the amidotransfer (transamidation) of the octanoyl moiety from octanoyl-GcvH to the lipoyl domain of the E2 subunit of lipoate-dependent enzymes. This chain is Octanoyl-[GcvH]:protein N-octanoyltransferase, found in Oceanobacillus iheyensis (strain DSM 14371 / CIP 107618 / JCM 11309 / KCTC 3954 / HTE831).